The primary structure comprises 445 residues: Ribosome biogenesis protein YTM1 (445 aa).

The tract at residues 8-89 (VKVKFFTREQ…EAVLNVEYTR (82 aa)) is ubiquitin-like (UBL) domain. A sufficient for interaction with ERB1 and association with 66S pre-ribosomes region spans residues 99–445 (SFSNEDWVSA…FNKGDNIFKN (347 aa)). WD repeat units follow at residues 101-138 (SNED…EKQY), 140-178 (GHTG…VKHV), 195-232 (GHQA…MTAV), 270-310 (SHKA…CVDT), 312-351 (STSY…SAKI), 358-398 (GHKN…SIYT), and 409-445 (GIND…IFKN).

This sequence belongs to the WD repeat WDR12/YTM1 family. As to quaternary structure, component of the NOP7 complex, composed of ERB1, NOP7 and YTM1. The complex is held together by ERB1, which interacts with NOP7 via its N-terminal domain and with YTM1 via a high-affinity interaction between the seven-bladed beta-propeller domains of the 2 proteins. The NOP7 complex associates with the 66S pre-ribosome. Interacts (via UBL domain) with MDN1 (via VWFA/MIDAS domain).

The protein resides in the nucleus. The protein localises to the nucleolus. Its subcellular location is the nucleoplasm. Its function is as follows. Component of the NOP7 complex, which is required for maturation of the 25S and 5.8S ribosomal RNAs and formation of the 60S ribosome. In Eremothecium gossypii (strain ATCC 10895 / CBS 109.51 / FGSC 9923 / NRRL Y-1056) (Yeast), this protein is Ribosome biogenesis protein YTM1.